The sequence spans 120 residues: U15-barytoxin-Tl1c (120 aa).

An N-terminal signal peptide occupies residues 1–16 (MKLFMVLVASFAFAVA). Disulfide bonds link Cys-55–Cys-73, Cys-66–Cys-79, Cys-70–Cys-118, and Cys-72–Cys-89.

Belongs to the neurotoxin 03 (Tx2) family. 03 subfamily. Expressed by the venom gland.

The protein localises to the secreted. Ion channel inhibitor. This is U15-barytoxin-Tl1c from Trittame loki (Brush-footed trapdoor spider).